The chain runs to 477 residues: Ankyrin repeat, SAM and basic leucine zipper domain-containing protein 1 (477 aa).

Phosphoserine is present on residues Ser-17, Ser-18, and Ser-20. ANK repeat units follow at residues Glu-46–Ala-76, Tyr-80–Phe-109, Asp-112–Val-146, Arg-150–Thr-179, Asn-183–Leu-212, and Asp-216–Gly-245. Residues Ser-274–Glu-336 form the SAM domain.

Interacts with DDX4, PIWIL1, RANBP9 and TDRD1.

It is found in the cytoplasm. Functionally, plays a central role during spermatogenesis by repressing transposable elements and preventing their mobilization, which is essential for the germline integrity. Acts via the piRNA metabolic process, which mediates the repression of transposable elements during meiosis by forming complexes composed of piRNAs and Piwi proteins and governs the methylation and subsequent repression of transposons. Its association with pi-bodies suggests a participation in the primary piRNAs metabolic process. Required prior to the pachytene stage to facilitate the production of multiple types of piRNAs, including those associated with repeats involved in the regulation of retrotransposons. May act by mediating protein-protein interactions during germ cell maturation. This is Ankyrin repeat, SAM and basic leucine zipper domain-containing protein 1 (ASZ1) from Callithrix jacchus (White-tufted-ear marmoset).